The primary structure comprises 901 residues: HTH-type transcriptional regulator MalT (901 aa).

39 to 46 (SPAGYGKT) is a binding site for ATP. The region spanning 829–894 (ELIRTSPLTQ…AAVQHAQKLL (66 aa)) is the HTH luxR-type domain. A DNA-binding region (H-T-H motif) is located at residues 853–872 (NEQIAGELEVAATTIKTHIR).

The protein belongs to the MalT family. Monomer in solution. Oligomerizes to an active state in the presence of the positive effectors ATP and maltotriose.

With respect to regulation, activated by ATP and maltotriose, which are both required for DNA binding. Positively regulates the transcription of the maltose regulon whose gene products are responsible for uptake and catabolism of malto-oligosaccharides. Specifically binds to the promoter region of its target genes, recognizing a short DNA motif called the MalT box. In Escherichia coli O6:K15:H31 (strain 536 / UPEC), this protein is HTH-type transcriptional regulator MalT.